Consider the following 515-residue polypeptide: Bifunctional purine biosynthesis protein PurH (515 aa).

One can recognise an MGS-like domain in the interval 1-145 (MTKRALISVS…KNHASVTVVV (145 aa)).

It belongs to the PurH family.

It carries out the reaction (6R)-10-formyltetrahydrofolate + 5-amino-1-(5-phospho-beta-D-ribosyl)imidazole-4-carboxamide = 5-formamido-1-(5-phospho-D-ribosyl)imidazole-4-carboxamide + (6S)-5,6,7,8-tetrahydrofolate. The catalysed reaction is IMP + H2O = 5-formamido-1-(5-phospho-D-ribosyl)imidazole-4-carboxamide. Its pathway is purine metabolism; IMP biosynthesis via de novo pathway; 5-formamido-1-(5-phospho-D-ribosyl)imidazole-4-carboxamide from 5-amino-1-(5-phospho-D-ribosyl)imidazole-4-carboxamide (10-formyl THF route): step 1/1. The protein operates within purine metabolism; IMP biosynthesis via de novo pathway; IMP from 5-formamido-1-(5-phospho-D-ribosyl)imidazole-4-carboxamide: step 1/1. The sequence is that of Bifunctional purine biosynthesis protein PurH from Streptococcus pyogenes serotype M2 (strain MGAS10270).